The sequence spans 281 residues: MEPQQQQQQQGNEQQDSQGIGKINNGSGGSSFLCRQSSTRWTPTTDQIRILKDLYYNNGVRSPTAEQIQRISAKLRQYGKIEGKNVFYWFQNHKARERQKKRFTADHHHHMNVPTIHNHHYKPPPVYNKFSNMNSGSFPSSSNGSPGFLTTPGSHVGNYGYGSVAMEKSFRECTISSTTDANVGGSMSQNIAWIGINNEYHNPYTFIDTRKYMNGYDQTLEIEEEAEENYTAEIETLPLFPMHADIKQDTADYFNGRLENGCPRASLELTLNSWFGNSKYN.

Residues 1–25 (MEPQQQQQQQGNEQQDSQGIGKINN) show a composition bias toward low complexity. The interval 1-38 (MEPQQQQQQQGNEQQDSQGIGKINNGSGGSSFLCRQSS) is disordered. Positions 36 to 101 (QSSTRWTPTT…NHKARERQKK (66 aa)) form a DNA-binding region, homeobox; WUS-type.

Belongs to the WUS homeobox family.

Its subcellular location is the nucleus. In terms of biological role, transcription factor that plays a central role during developmental processes such as early embryogenesis and flowering, probably by regulating expression of specific genes. Required to specify stem cell identity in meristems, such as shoot apical meristem (SAM). May induce shoot stem cells activity in order to maintain the stem cell identity. This chain is Protein WUSCHEL (WUS), found in Antirrhinum majus (Garden snapdragon).